A 240-amino-acid chain; its full sequence is LexA repressor (240 aa).

The segment at residues 26–46 is a DNA-binding region (H-T-H motif); it reads FDEMKDALDLASKSGIHRLIT. The interval 78-113 is disordered; it reads QPRRGFSPSVIEGSLGKPQPVQPPAPAKPANDENNS. Catalysis depends on for autocatalytic cleavage activity residues Ser160 and Lys198.

Belongs to the peptidase S24 family. Homodimer.

The catalysed reaction is Hydrolysis of Ala-|-Gly bond in repressor LexA.. Represses a number of genes involved in the response to DNA damage (SOS response), including recA and lexA. In the presence of single-stranded DNA, RecA interacts with LexA causing an autocatalytic cleavage which disrupts the DNA-binding part of LexA, leading to derepression of the SOS regulon and eventually DNA repair. The chain is LexA repressor from Rhizobium rhizogenes (strain K84 / ATCC BAA-868) (Agrobacterium radiobacter).